Consider the following 225-residue polypeptide: Ribosomal RNA large subunit methyltransferase E (225 aa).

Positions 64, 66, 93, 109, and 138 each coordinate S-adenosyl-L-methionine. The Proton acceptor role is filled by K178.

It belongs to the class I-like SAM-binding methyltransferase superfamily. RNA methyltransferase RlmE family.

Its subcellular location is the cytoplasm. It catalyses the reaction uridine(2552) in 23S rRNA + S-adenosyl-L-methionine = 2'-O-methyluridine(2552) in 23S rRNA + S-adenosyl-L-homocysteine + H(+). Specifically methylates the uridine in position 2552 of 23S rRNA at the 2'-O position of the ribose in the fully assembled 50S ribosomal subunit. The protein is Ribosomal RNA large subunit methyltransferase E of Cupriavidus pinatubonensis (strain JMP 134 / LMG 1197) (Cupriavidus necator (strain JMP 134)).